The chain runs to 150 residues: D-aminoacyl-tRNA deacylase (150 aa).

The Gly-cisPro motif, important for rejection of L-amino acids motif lies at Gly-136–Pro-137.

Belongs to the DTD family. As to quaternary structure, homodimer.

It is found in the cytoplasm. It catalyses the reaction glycyl-tRNA(Ala) + H2O = tRNA(Ala) + glycine + H(+). It carries out the reaction a D-aminoacyl-tRNA + H2O = a tRNA + a D-alpha-amino acid + H(+). An aminoacyl-tRNA editing enzyme that deacylates mischarged D-aminoacyl-tRNAs. Also deacylates mischarged glycyl-tRNA(Ala), protecting cells against glycine mischarging by AlaRS. Acts via tRNA-based rather than protein-based catalysis; rejects L-amino acids rather than detecting D-amino acids in the active site. By recycling D-aminoacyl-tRNA to D-amino acids and free tRNA molecules, this enzyme counteracts the toxicity associated with the formation of D-aminoacyl-tRNA entities in vivo and helps enforce protein L-homochirality. The polypeptide is D-aminoacyl-tRNA deacylase (Staphylococcus epidermidis (strain ATCC 35984 / DSM 28319 / BCRC 17069 / CCUG 31568 / BM 3577 / RP62A)).